We begin with the raw amino-acid sequence, 351 residues long: MSDQPKMIYLPETMANWPWPRYINPHYEEVKAESDAWFKGFKPFTKQSQVAFDKCDFGRLASLAYPWASKEHLRTGCDLMNVFFMIDEYTDVECASVVRGMVDIVIDVINNPHKPRPEGESLLGEITRQFWERAIKAATPSSQKHFIEAFTDYLNSVVEQAADRDNNHIRTVDSYLKTRRENIGARPSYFPAELGLNLPDEAFYHPVVTELSYNIAELIILDNDIASYNKEQATGDDRHNILTIVMLQFNIDLEAAMTWVASYHKDVENKFLDGMKKLPSFGPVVDKELEEYILALAIWPRTNDCWNFESGRYFGSKGLQVQKTRYVPLLPKVKTDPTLKQKQVVVSLVDL.

Positions 87, 223, 227, and 231 each coordinate Mg(2+). The DDXXD motif signature appears at 87 to 91 (DEYTD). An NSE/DTE motif motif is present at residues 223–231 (NDIASYNKE). The (2E,6E)-farnesyl diphosphate site is built by R312 and Y313.

Belongs to the terpene synthase family. It depends on Mg(2+) as a cofactor.

It carries out the reaction (2E,6E)-farnesyl diphosphate = pentalenene + diphosphate. In terms of biological role, terpene cyclase that catalyzes the cyclization of farnesyl diphosphate (FPP) to pentalenene as a major product, as well as caryophyllene. This chain is Sesquiterpene synthase 14, found in Postia placenta (strain ATCC 44394 / Madison 698-R) (Brown rot fungus).